The primary structure comprises 1260 residues: ATP-dependent helicase/deoxyribonuclease subunit B (1260 aa).

This sequence belongs to the helicase family. AddB/RexB type 2 subfamily. In terms of assembly, heterodimer of AddA and RexB. Mg(2+) is required as a cofactor.

Functionally, the heterodimer acts as both an ATP-dependent DNA helicase and an ATP-dependent, dual-direction single-stranded exonuclease. Recognizes the chi site generating a DNA molecule suitable for the initiation of homologous recombination. This subunit has 5' -&gt; 3' nuclease activity but not helicase activity. The protein is ATP-dependent helicase/deoxyribonuclease subunit B of Limosilactobacillus reuteri (strain DSM 20016) (Lactobacillus reuteri).